Here is a 42-residue protein sequence, read N- to C-terminus: Photosystem I reaction center subunit IX (42 aa).

The chain crosses the membrane as a helical span at residues 7–27 (YLSVAPVLSTLWFVSLAGLLI).

This sequence belongs to the PsaJ family.

It localises to the plastid. Its subcellular location is the chloroplast thylakoid membrane. Its function is as follows. May help in the organization of the PsaE and PsaF subunits. This is Photosystem I reaction center subunit IX from Capsella bursa-pastoris (Shepherd's purse).